The sequence spans 262 residues: MVRGPKKHLKRVAAPHHWLLDKLSGTYAPKPSPGPHKARECLPLIVFLRNRLKYALNGREVKAILMQRLIKVDGKVRTDSTFPTGFMDVISVDKTGEHFRLVYDIKGRFTVHRITAEEAKYKLCKVKRVQLGAKGVPFLVTHDGRTIRYPDPLIKVNDTIKLNLETNKIESFIKFDTSAQVMVTGGRNMGRVGTIVHREHHLGSFEIIHVKDALDREFATRLSNVFVIGETGKSWISLPKGKGVKLSITEERDRRRALKGLA.

One can recognise an S4 RNA-binding domain in the interval 42–105 (LPLIVFLRNR…GEHFRLVYDI (64 aa)). T194 carries the post-translational modification Phosphothreonine.

The protein belongs to the eukaryotic ribosomal protein eS4 family. As to quaternary structure, component of the small ribosomal subunit (SSU). Mature yeast ribosomes consist of a small (40S) and a large (60S) subunit. The 40S small subunit contains 1 molecule of ribosomal RNA (18S rRNA) and at least 33 different proteins. The large 60S subunit contains 3 rRNA molecules (25S, 5.8S and 5S rRNA) and at least 46 different proteins.

Its subcellular location is the cytoplasm. Component of the ribosome, a large ribonucleoprotein complex responsible for the synthesis of proteins in the cell. The small ribosomal subunit (SSU) binds messenger RNAs (mRNAs) and translates the encoded message by selecting cognate aminoacyl-transfer RNA (tRNA) molecules. The large subunit (LSU) contains the ribosomal catalytic site termed the peptidyl transferase center (PTC), which catalyzes the formation of peptide bonds, thereby polymerizing the amino acids delivered by tRNAs into a polypeptide chain. The nascent polypeptides leave the ribosome through a tunnel in the LSU and interact with protein factors that function in enzymatic processing, targeting, and the membrane insertion of nascent chains at the exit of the ribosomal tunnel. The sequence is that of Small ribosomal subunit protein eS4C (rps403) from Schizosaccharomyces pombe (strain 972 / ATCC 24843) (Fission yeast).